Here is a 605-residue protein sequence, read N- to C-terminus: Cell wall integrity and stress response component 4 (605 aa).

An N-terminal signal peptide occupies residues 1–26 (MQTSMVSAKVSIWLVCSVICSSLVRA). Residues 27-110 (TQSVCSSQNT…DKDLFGYIYL (84 aa)) form the WSC domain. The segment at 151 to 305 (SPTLTSTSTT…PSSTTVTYTS (155 aa)) is disordered. N-linked (GlcNAc...) asparagine glycosylation is found at Asn340, Asn386, Asn389, and Asn398. The span at 381–399 (RITNNNNSNTTNSNTPTNK) shows a compositional bias: low complexity. Positions 381–404 (RITNNNNSNTTNSNTPTNKSTEKK) are disordered. The helical transmembrane segment at 415-435 (ATFVVVGVVCLVIICILIYLI) threads the bilayer. Residue Asn479 is glycosylated (N-linked (GlcNAc...) asparagine). The interval 494 to 521 (GQIMSESPSPRQSTYSLTAGSPPNDPST) is disordered. Residues 497–521 (MSESPSPRQSTYSLTAGSPPNDPST) show a composition bias toward polar residues. Asn553 and Asn583 each carry an N-linked (GlcNAc...) asparagine glycan.

It is found in the membrane. This Saccharomyces cerevisiae (strain ATCC 204508 / S288c) (Baker's yeast) protein is Cell wall integrity and stress response component 4 (WSC4).